A 678-amino-acid polypeptide reads, in one-letter code: Penicillin-binding protein activator LpoA (678 aa).

The N-terminal stretch at 1 to 26 is a signal peptide; it reads MVPSTFSRLKAARCLPVVLAALIFAG. Cys27 carries N-palmitoyl cysteine lipidation. Residue Cys27 is the site of S-diacylglycerol cysteine attachment. Low complexity-rich tracts occupy residues 300 to 310, 330 to 340, and 513 to 528; these read AADVAEQPQPQ, QPAAQPVPVSA, and TTNNPTLQTTPTDDQF. 2 disordered regions span residues 300 to 340 and 496 to 528; these read AADV…PVSA and ALTGSPITPRATTDSGMTTNNPTLQTTPTDDQF.

This sequence belongs to the LpoA family. As to quaternary structure, interacts with PBP1a.

The protein resides in the cell outer membrane. Its function is as follows. Regulator of peptidoglycan synthesis that is essential for the function of penicillin-binding protein 1A (PBP1a). In Shigella flexneri serotype 5b (strain 8401), this protein is Penicillin-binding protein activator LpoA.